The chain runs to 752 residues: Pre-mRNA-processing factor 39 (752 aa).

Residues 1-148 are disordered; the sequence is MEDSGESMTG…DPAAPQEPEL (148 aa). Polar residues predominate over residues 28 to 42; it reads TTGTDDVTGLSTSDL. 3 stretches are compositionally biased toward low complexity: residues 43-56, 76-94, and 133-148; these read TTEQPPESQEQTQP, QSASPAEPAAENSEQPPES, and EPAAEADPAAPQEPEL. HAT repeat units lie at residues 180–212, 214–246, and 254–289; these read NHLLGSRKAFDAFFLHYPYCYGYWKKYADIERK, GYIQMADEVYRRGLQAIPLSVDLWLHYITFLRE, and EAESRIRASYEHAVLACGTDFRSDRLWEAYIAWETE. The segment at 347–374 is disordered; the sequence is NKPSGDEDAETEAPGEELPPGTEDLPDP. Residues 352–361 are compositionally biased toward acidic residues; the sequence is DEDAETEAPG. 2 HAT repeats span residues 408–440 and 442–474; these read AFEEGIKRPYFHVKALEKTQLNNWREYLDFELE and GTPERVVVLFERCLIACALYEEFWIKYAKYLES. Over residues 678–699 the composition is skewed to basic and acidic residues; sequence SFKRKAENGSEEPDAKRQRTDD. Residues 678 to 703 form a disordered region; it reads SFKRKAENGSEEPDAKRQRTDDQSVA. An HAT 6 repeat occupies 700–731; sequence QSVASGQMMDMQANHAGYNYNNWYQYNSWGSQ.

It belongs to the PRP39 family.

It is found in the nucleus. Involved in pre-mRNA splicing. The protein is Pre-mRNA-processing factor 39 (prpf39) of Danio rerio (Zebrafish).